Consider the following 63-residue polypeptide: MSKEVLEKELFEMLDEDVRELLSLIHEIKIDRITGNMDKQKLGKAYFQVQKIEAELYQLIKVS.

In terms of assembly, homodimer.

This protein may be involved in virus assembly. The chain is Protein D-63 from Saccharolobus solfataricus (Sulfolobus solfataricus).